A 293-amino-acid chain; its full sequence is Serine/threonine-protein phosphatase 2A catalytic subunit beta isoform (293 aa).

Mn(2+) contacts are provided by Asp41, His43, Asp69, and Asn101. Residue His102 is the Proton donor of the active site. Positions 151 and 225 each coordinate Mn(2+). Tyr291 carries the post-translational modification Phosphotyrosine. The residue at position 293 (Leu293) is a Leucine methyl ester.

This sequence belongs to the PPP phosphatase family. PP-1 subfamily. Found in a complex with at least ARL2, PPP2CB, PPP2R1A, PPP2R2A, PPP2R5E and TBCD. Interacts with TBCD. PP2A consists of a common heterodimeric core enzyme (composed of a 36 kDa catalytic subunit (subunit C) and a 65 kDa constant regulatory subunit (PR65) (subunit A)) that associates with a variety of regulatory subunits. Proteins that associate with the core dimer include three families of regulatory subunits B (the R2/B/PR55/B55, R3/B''/PR72/PR130/PR59 and R5/B'/B56 families), the 48 kDa variable regulatory subunit, viral proteins, and cell signaling molecules. Binds PPME1. May indirectly interact with SGO1, most probably through regulatory B56 subunits. Interacts with CTTNBP2NL. Interacts with PTPA. Part of the core of STRIPAK complexes composed of PP2A catalytic and scaffolding subunits, the striatins (PP2A regulatory subunits), the striatin-associated proteins MOB4, STRIP1 and STRIP2, PDCD10 and members of the STE20 kinases, such as STK24 and STK26. Requires Mn(2+) as cofactor. Post-translationally, reversibly methyl esterified on Leu-293 by leucine carboxyl methyltransferase 1 (Lcmt1) and protein phosphatase methylesterase 1 (PPME1). Carboxyl methylation influences the affinity of the catalytic subunit for the different regulatory subunits, thereby modulating the PP2A holoenzyme's substrate specificity, enzyme activity and cellular localization. Phosphorylation of either threonine (by autophosphorylation-activated protein kinase) or tyrosine results in inactivation of the phosphatase. Auto-dephosphorylation has been suggested as a mechanism for reactivation. In terms of processing, may be monoubiquitinated by NOSIP.

The protein resides in the cytoplasm. Its subcellular location is the nucleus. It localises to the chromosome. It is found in the centromere. The protein localises to the cytoskeleton. The protein resides in the spindle pole. The catalysed reaction is O-phospho-L-seryl-[protein] + H2O = L-seryl-[protein] + phosphate. The enzyme catalyses O-phospho-L-threonyl-[protein] + H2O = L-threonyl-[protein] + phosphate. In terms of biological role, catalytic subunit of protein phosphatase 2A (PP2A), a serine/threonine phosphatase involved in the regulation of a wide variety of enzymes, signal transduction pathways, and cellular events. PP2A can modulate the activity of phosphorylase B kinase, casein kinase 2, mitogen-stimulated S6 kinase, and MAP-2 kinase. Part of the striatin-interacting phosphatase and kinase (STRIPAK) complexes. STRIPAK complexes have critical roles in protein (de)phosphorylation and are regulators of multiple signaling pathways including Hippo, MAPK, nuclear receptor and cytoskeleton remodeling. Different types of STRIPAK complexes are involved in a variety of biological processes such as cell growth, differentiation, apoptosis, metabolism and immune regulation. In Sus scrofa (Pig), this protein is Serine/threonine-protein phosphatase 2A catalytic subunit beta isoform (PPP2CB).